A 496-amino-acid polypeptide reads, in one-letter code: Probable cytosol aminopeptidase (496 aa).

Residues lysine 261 and aspartate 266 each contribute to the Mn(2+) site. Residue lysine 273 is part of the active site. 3 residues coordinate Mn(2+): aspartate 284, aspartate 343, and glutamate 345. Residue arginine 347 is part of the active site.

The protein belongs to the peptidase M17 family. Mn(2+) is required as a cofactor.

It localises to the cytoplasm. The catalysed reaction is Release of an N-terminal amino acid, Xaa-|-Yaa-, in which Xaa is preferably Leu, but may be other amino acids including Pro although not Arg or Lys, and Yaa may be Pro. Amino acid amides and methyl esters are also readily hydrolyzed, but rates on arylamides are exceedingly low.. It carries out the reaction Release of an N-terminal amino acid, preferentially leucine, but not glutamic or aspartic acids.. In terms of biological role, presumably involved in the processing and regular turnover of intracellular proteins. Catalyzes the removal of unsubstituted N-terminal amino acids from various peptides. This chain is Probable cytosol aminopeptidase, found in Bacillus pumilus (strain SAFR-032).